The primary structure comprises 481 residues: Serine--tRNA ligase (481 aa).

Residue 284 to 286 (TAE) participates in L-serine binding. 315 to 317 (RAE) provides a ligand contact to ATP. E338 provides a ligand contact to L-serine. 405–408 (EISS) serves as a coordination point for ATP. S440 lines the L-serine pocket.

The protein belongs to the class-II aminoacyl-tRNA synthetase family. Type-1 seryl-tRNA synthetase subfamily. As to quaternary structure, homodimer. The tRNA molecule binds across the dimer.

The protein localises to the cytoplasm. It carries out the reaction tRNA(Ser) + L-serine + ATP = L-seryl-tRNA(Ser) + AMP + diphosphate + H(+). The enzyme catalyses tRNA(Sec) + L-serine + ATP = L-seryl-tRNA(Sec) + AMP + diphosphate + H(+). It functions in the pathway aminoacyl-tRNA biosynthesis; selenocysteinyl-tRNA(Sec) biosynthesis; L-seryl-tRNA(Sec) from L-serine and tRNA(Sec): step 1/1. Catalyzes the attachment of serine to tRNA(Ser). Is also able to aminoacylate tRNA(Sec) with serine, to form the misacylated tRNA L-seryl-tRNA(Sec), which will be further converted into selenocysteinyl-tRNA(Sec). This Rhodopseudomonas palustris (strain BisB18) protein is Serine--tRNA ligase.